The primary structure comprises 305 residues: UDP-3-O-acyl-N-acetylglucosamine deacetylase (305 aa).

Histidine 79, histidine 238, and aspartate 242 together coordinate Zn(2+). Histidine 265 functions as the Proton donor in the catalytic mechanism.

The protein belongs to the LpxC family. Requires Zn(2+) as cofactor.

The catalysed reaction is a UDP-3-O-[(3R)-3-hydroxyacyl]-N-acetyl-alpha-D-glucosamine + H2O = a UDP-3-O-[(3R)-3-hydroxyacyl]-alpha-D-glucosamine + acetate. Its pathway is glycolipid biosynthesis; lipid IV(A) biosynthesis; lipid IV(A) from (3R)-3-hydroxytetradecanoyl-[acyl-carrier-protein] and UDP-N-acetyl-alpha-D-glucosamine: step 2/6. Catalyzes the hydrolysis of UDP-3-O-myristoyl-N-acetylglucosamine to form UDP-3-O-myristoylglucosamine and acetate, the committed step in lipid A biosynthesis. This chain is UDP-3-O-acyl-N-acetylglucosamine deacetylase, found in Cronobacter sakazakii (strain ATCC BAA-894) (Enterobacter sakazakii).